Reading from the N-terminus, the 370-residue chain is Peptide chain release factor 1 (370 aa).

Glutamine 231 bears the N5-methylglutamine mark. Over residues 284–293 (AREERERETR) the composition is skewed to basic and acidic residues. The tract at residues 284 to 303 (AREERERETRAAQVGTGERS) is disordered.

The protein belongs to the prokaryotic/mitochondrial release factor family. Post-translationally, methylated by PrmC. Methylation increases the termination efficiency of RF1.

It is found in the cytoplasm. Its function is as follows. Peptide chain release factor 1 directs the termination of translation in response to the peptide chain termination codons UAG and UAA. The polypeptide is Peptide chain release factor 1 (Deinococcus geothermalis (strain DSM 11300 / CIP 105573 / AG-3a)).